The primary structure comprises 1466 residues: Helicase ARIP4 (1466 aa).

Disordered regions lie at residues 1-137 (MSDE…ERRK) and 185-235 (DSSS…THVN). Acidic residues predominate over residues 11 to 49 (PDLDPDVELEDEEEEEEEEEVAVEEHDRDDEEGLLDDTS). Over residues 72 to 82 (TSTTSSQSEPS) the composition is skewed to low complexity. The span at 99-114 (KKRAQKPSHMRRNIRK) shows a compositional bias: basic residues. Residues Lys-114 and Lys-126 each participate in a glycyl lysine isopeptide (Lys-Gly) (interchain with G-Cter in SUMO2) cross-link. A compositionally biased stretch (basic and acidic residues) spans 191–200 (EDEKSSRDEV). Residue Lys-271 forms a Glycyl lysine isopeptide (Lys-Gly) (interchain with G-Cter in SUMO2) linkage. The Helicase ATP-binding domain occupies 291-511 (RFKTSSGFGC…WCMVDFVRPD (221 aa)). ATP is bound at residue 304–311 (HSMGLGKT). The DEAH box motif lies at 462–465 (DEGH). The LXXLL motif 1 signature appears at 550–554 (LHSLL). A disordered region spans residues 649–670 (SAGTSARCPPHGTKVKGEDSAL). Glycyl lysine isopeptide (Lys-Gly) (interchain with G-Cter in SUMO2) cross-links involve residues Lys-664, Lys-681, Lys-758, Lys-900, Lys-1013, and Lys-1017. The 169-residue stretch at 727–895 (HLIEESVKLG…RVVDDLNPML (169 aa)) folds into the Helicase C-terminal domain. Disordered regions lie at residues 1026 to 1045 (QSTP…GVSS) and 1120 to 1170 (ATGK…VSPD). The segment covering 1135–1154 (SGSQGPSLASTSNGRHSASS) has biased composition (polar residues). Phosphoserine is present on residues Ser-1168 and Ser-1171. Disordered regions lie at residues 1184–1212 (VAAA…MDNS) and 1259–1281 (TPSV…APVQ). Thr-1259 is subject to Phosphothreonine. The LXXLL motif 2 motif lies at 1328-1332 (LSNLL). Residues 1444–1466 (AEVGFSSNDDEDKDDDVIEVTGK) are disordered. Over residues 1451–1466 (NDDEDKDDDVIEVTGK) the composition is skewed to acidic residues.

The protein belongs to the SNF2/RAD54 helicase family. In terms of assembly, interacts with AR via its N-terminus. Interacts with DYRK1A. Binds DNA and mononucleosomes, but does not seem to form large multiprotein complexes. In terms of processing, sumoylated. Expressed at relatively low level, with highest expression in testis, liver and kidney. In brain, it is expressed in hippocampal and cerebellar neurons. In testis, it is present at high level in Sertoli cell nuclei. Also present in Leydig cell (at protein level).

It localises to the nucleus. The enzyme catalyses ATP + H2O = ADP + phosphate + H(+). With respect to regulation, enzyme activity is enhanced by dsDNA (double-stranded DNA) and ssDNA (single-stranded DNA). DNA helicase that modulates androgen receptor (AR)-dependent transactivation in a promoter-dependent manner. Not able to remodel mononucleosomes in vitro. Acts as an AR-coregulator in Sertoli cells. This is Helicase ARIP4 (Rad54l2) from Mus musculus (Mouse).